The sequence spans 216 residues: Dephospho-CoA kinase (216 aa).

Residues 18–216 enclose the DPCK domain; sequence IIGVIGPPCS…SELASVLQSK (199 aa). 26–31 is an ATP binding site; that stretch reads CSGKST.

Belongs to the CoaE family.

It localises to the cytoplasm. It catalyses the reaction 3'-dephospho-CoA + ATP = ADP + CoA + H(+). It functions in the pathway cofactor biosynthesis; coenzyme A biosynthesis; CoA from (R)-pantothenate: step 5/5. Functionally, catalyzes the phosphorylation of the 3'-hydroxyl group of dephosphocoenzyme A to form coenzyme A. The sequence is that of Dephospho-CoA kinase from Rhodopirellula baltica (strain DSM 10527 / NCIMB 13988 / SH1).